The primary structure comprises 218 residues: N-(5'-phosphoribosyl)anthranilate isomerase (218 aa).

The protein belongs to the TrpF family.

It catalyses the reaction N-(5-phospho-beta-D-ribosyl)anthranilate = 1-(2-carboxyphenylamino)-1-deoxy-D-ribulose 5-phosphate. Its pathway is amino-acid biosynthesis; L-tryptophan biosynthesis; L-tryptophan from chorismate: step 3/5. The chain is N-(5'-phosphoribosyl)anthranilate isomerase from Rhodopseudomonas palustris (strain BisB5).